The primary structure comprises 157 residues: Arginine repressor (157 aa).

This sequence belongs to the ArgR family.

Its subcellular location is the cytoplasm. It functions in the pathway amino-acid biosynthesis; L-arginine biosynthesis [regulation]. Regulates arginine biosynthesis genes. The polypeptide is Arginine repressor (Bacteroides fragilis (strain ATCC 25285 / DSM 2151 / CCUG 4856 / JCM 11019 / LMG 10263 / NCTC 9343 / Onslow / VPI 2553 / EN-2)).